The sequence spans 1023 residues: Cell division cycle-associated protein 2 (1023 aa).

Over residues 1–14 (MDANSKDKPPETKE) the composition is skewed to basic and acidic residues. Positions 1-21 (MDANSKDKPPETKESAMNNAG) are disordered. Phosphoserine is present on residues serine 98, serine 120, serine 126, serine 131, serine 210, serine 291, and serine 309. The residue at position 312 (threonine 312) is a Phosphothreonine. In terms of domain architecture, PP1-binding spans 389–449 (KRKRVTFGED…PEPLPQPDFD (61 aa)). Phosphoserine is present on residues serine 400 and serine 407. Phosphothreonine is present on threonine 412. Serine 437 carries the post-translational modification Phosphoserine. The tract at residues 542–580 (SQETKCTKRALPKKSQVLKSCRKKKGKGKKSVQKSLYGE) is disordered. The segment covering 561 to 573 (SCRKKKGKGKKSV) has biased composition (basic residues). Phosphoserine is present on residues serine 591 and serine 614. The tract at residues 667–729 (SSLGNATSDE…ERVASDSPKP (63 aa)) is disordered. The segment covering 679–691 (NTNIMNINENKNI) has biased composition (low complexity). Residues 696 to 706 (NKSESENEPKA) are compositionally biased toward basic and acidic residues. A phosphoserine mark is found at serine 710 and serine 756. Residue lysine 762 forms a Glycyl lysine isopeptide (Lys-Gly) (interchain with G-Cter in SUMO2) linkage. Over residues 803-816 (ESKSQSEDLGRKPM) the composition is skewed to basic and acidic residues. 2 disordered regions span residues 803 to 860 (ESKS…GSSV) and 936 to 1023 (SPIK…ERKQ). Phosphoserine occurs at positions 936 and 977. Polar residues-rich tracts occupy residues 979-992 (CISTLANTKATSQF) and 1000-1010 (SLNGKGESSLT). Position 1000 is a phosphoserine (serine 1000). A compositionally biased stretch (basic and acidic residues) spans 1013 to 1023 (ERIEHNGERKQ).

In terms of assembly, interacts with PPP1CC. Post-translationally, phosphorylated by CDK1. May regulate its subcellular location. Ubiquitously expressed.

Its subcellular location is the nucleus. Its function is as follows. Regulator of chromosome structure during mitosis required for condensin-depleted chromosomes to retain their compact architecture through anaphase. Acts by mediating the recruitment of phopsphatase PP1-gamma subunit (PPP1CC) to chromatin at anaphase and into the following interphase. At anaphase onset, its association with chromatin targets a pool of PPP1CC to dephosphorylate substrates. The polypeptide is Cell division cycle-associated protein 2 (CDCA2) (Homo sapiens (Human)).